A 289-amino-acid chain; its full sequence is 5'-3' exonuclease (289 aa).

The region spanning 166–256 is the 5'-3' exonuclease domain; the sequence is VEPQKIPDYL…EEDLKIKRPD (91 aa).

Functionally, 5'-3' exonuclease acting preferentially on double-stranded DNA. The sequence is that of 5'-3' exonuclease from Aquifex aeolicus (strain VF5).